The primary structure comprises 366 residues: DNA-directed RNA polymerase subunit alpha (366 aa).

An alpha N-terminal domain (alpha-NTD) region spans residues 1–260 (MAISDNGGGS…DQLQSFIGSE (260 aa)). The alpha C-terminal domain (alpha-CTD) stretch occupies residues 274–366 (EGALPYDHNL…ENLSKQYSED (93 aa)).

It belongs to the RNA polymerase alpha chain family. Homodimer. The RNAP catalytic core consists of 2 alpha, 1 beta, 1 beta' and 1 omega subunit. When a sigma factor is associated with the core the holoenzyme is formed, which can initiate transcription.

It catalyses the reaction RNA(n) + a ribonucleoside 5'-triphosphate = RNA(n+1) + diphosphate. In terms of biological role, DNA-dependent RNA polymerase catalyzes the transcription of DNA into RNA using the four ribonucleoside triphosphates as substrates. The protein is DNA-directed RNA polymerase subunit alpha of Anaplasma marginale (strain St. Maries).